The chain runs to 90 residues: Small ribosomal subunit protein bS20 (90 aa).

The interval 1 to 25 (MANSAQARKRARQAAKANSHNSALR) is disordered.

It belongs to the bacterial ribosomal protein bS20 family.

Its function is as follows. Binds directly to 16S ribosomal RNA. This is Small ribosomal subunit protein bS20 from Burkholderia orbicola (strain MC0-3).